We begin with the raw amino-acid sequence, 191 residues long: Cell division protein SepF (191 aa).

Residues 156-167 are compositionally biased toward polar residues; sequence EEASPSNMSNKG. Residues 156–191 are disordered; it reads EEASPSNMSNKGNDLISKETSPAPEPAWGETVATAL.

This sequence belongs to the SepF family. As to quaternary structure, homodimer. Interacts with FtsZ.

It is found in the cytoplasm. Functionally, cell division protein that is part of the divisome complex and is recruited early to the Z-ring. Probably stimulates Z-ring formation, perhaps through the cross-linking of FtsZ protofilaments. Its function overlaps with FtsA. This chain is Cell division protein SepF, found in Prochlorococcus marinus (strain NATL2A).